The sequence spans 225 residues: MHLLIAAAGSGSRMGADRNKLLLKVAGKTVLEWTLKAAFEAKTISWIGIIGQPKDKNPICSILDNSVKAVQWINGGSTRQQSVQLGLAALPNDAKSVLIHDGARCLVRSFVFDEISKIVSKGQSVIAASQVTDTIKKVDIDGEIIESPPRSDLWAAQTPQGFPVNKLKHAHSEAISKGWNVTDDASLFERLGLPVKIYDAGPSNIKVTTPFDLVIAESLLSTLKD.

The protein belongs to the IspD/TarI cytidylyltransferase family. IspD subfamily.

The enzyme catalyses 2-C-methyl-D-erythritol 4-phosphate + CTP + H(+) = 4-CDP-2-C-methyl-D-erythritol + diphosphate. The protein operates within isoprenoid biosynthesis; isopentenyl diphosphate biosynthesis via DXP pathway; isopentenyl diphosphate from 1-deoxy-D-xylulose 5-phosphate: step 2/6. Functionally, catalyzes the formation of 4-diphosphocytidyl-2-C-methyl-D-erythritol from CTP and 2-C-methyl-D-erythritol 4-phosphate (MEP). In Prochlorococcus marinus (strain NATL2A), this protein is 2-C-methyl-D-erythritol 4-phosphate cytidylyltransferase.